We begin with the raw amino-acid sequence, 192 residues long: Ion-translocating oxidoreductase complex subunit B (192 aa).

The interval 1–26 (MNAIWIAVAAVSLLGLAFGAILGYAS) is hydrophobic. Residues 32–91 (EDDPVVEKIDEILPQSQCGQCGYPGCRPYAEAISCNGEKINRCAPGGEAVMLKIAELLNV) enclose the 4Fe-4S domain. The [4Fe-4S] cluster site is built by Cys-49, Cys-52, Cys-57, Cys-74, Cys-117, Cys-120, Cys-123, Cys-127, Cys-147, Cys-150, Cys-153, and Cys-157. 4Fe-4S ferredoxin-type domains follow at residues 108-137 (MVAVIDENNCIGCTKCIQACPVDAIVGATR) and 138-167 (AMHTVMSDLCTGCNLCVDPCPTHCISLQPV).

It belongs to the 4Fe4S bacterial-type ferredoxin family. RnfB subfamily. The complex is composed of six subunits: RsxA, RsxB, RsxC, RsxD, RsxE and RsxG. It depends on [4Fe-4S] cluster as a cofactor.

It is found in the cell inner membrane. In terms of biological role, part of a membrane-bound complex that couples electron transfer with translocation of ions across the membrane. Required to maintain the reduced state of SoxR. The protein is Ion-translocating oxidoreductase complex subunit B of Escherichia coli O127:H6 (strain E2348/69 / EPEC).